The sequence spans 364 residues: Fructose-bisphosphate aldolase B (364 aa).

Ala-2 bears the N-acetylalanine mark. Lys-13 carries the N6-succinyllysine modification. Ser-36 is modified (phosphoserine). Thr-39 bears the Phosphothreonine mark. A beta-D-fructose 1,6-bisphosphate-binding site is contributed by Arg-43. Ser-89 carries the post-translational modification Phosphoserine. Thr-119 carries the phosphothreonine modification. The residue at position 121 (Lys-121) is an N6-succinyllysine. Ser-132 carries the phosphoserine modification. The active-site Proton acceptor is Glu-188. A Phosphoserine modification is found at Ser-206. The active-site Schiff-base intermediate with dihydroxyacetone-P is Lys-230. A phosphoserine mark is found at Ser-272, Ser-276, Ser-299, and Ser-301. 272-274 (SGG) lines the beta-D-fructose 1,6-bisphosphate pocket. Arg-304 lines the beta-D-fructose 1,6-bisphosphate pocket. Position 309 is a phosphoserine (Ser-309). An N6-succinyllysine modification is found at Lys-317.

This sequence belongs to the class I fructose-bisphosphate aldolase family. Homotetramer. Interacts with BBS1, BBS2, BBS4 and BBS7. Forms a ternary complex with G6PD and TP53; this interaction is direct.

The protein resides in the cytoplasm. It localises to the cytosol. Its subcellular location is the cytoskeleton. It is found in the microtubule organizing center. The protein localises to the centrosome. The protein resides in the centriolar satellite. The enzyme catalyses beta-D-fructose 1,6-bisphosphate = D-glyceraldehyde 3-phosphate + dihydroxyacetone phosphate. The catalysed reaction is beta-D-fructose 1-phosphate = D-glyceraldehyde + dihydroxyacetone phosphate. The protein operates within carbohydrate degradation; glycolysis; D-glyceraldehyde 3-phosphate and glycerone phosphate from D-glucose: step 4/4. It functions in the pathway carbohydrate biosynthesis; gluconeogenesis. It participates in carbohydrate metabolism; fructose metabolism. Functionally, catalyzes the aldol cleavage of fructose 1,6-biphosphate to form two triosephosphates dihydroxyacetone phosphate and D-glyceraldehyde 3-phosphate in glycolysis as well as the reverse stereospecific aldol addition reaction in gluconeogenesis. In fructolysis, metabolizes fructose 1-phosphate derived from the phosphorylation of dietary fructose by fructokinase into dihydroxyacetone phosphate and D-glyceraldehyde. Acts as an adapter independently of its enzymatic activity, exerts a tumor suppressor role by stabilizing the ternary complex with G6PD and TP53 to inhibit G6PD activity and keep oxidative pentose phosphate metabolism in check. The chain is Fructose-bisphosphate aldolase B from Mus musculus (Mouse).